Reading from the N-terminus, the 273-residue chain is MLGQLLPHTARGLGAAEMPGQGPGSDWTERSSSAEPPAVAGTEGGGGGSAGYSCYQNSKGSDRIKDGYKVNSHIAKLQELWKTPQNQTIHLSKSMMEASFFKHPDLTTGQKRYLCSIAKIYNANYLKMLMKRQYMHVLQHSSQKPGVLTHHRSRLSSRYSQKQHYPCTTWRHQLEREDSGSSDIAAASAPEMLIQHSLWRPVRNKEGIKTGYASKTRCKSLKIFRRPRKLFMQTVSSDDSESHMSEEKKEEDLLNNFMQSMSIEEQGEHLMLT.

The tract at residues 1-47 is disordered; the sequence is MLGQLLPHTARGLGAAEMPGQGPGSDWTERSSSAEPPAVAGTEGGGG.

This sequence belongs to the FAM216 family.

The sequence is that of Protein FAM216A (FAM216A) from Homo sapiens (Human).